Consider the following 188-residue polypeptide: MSESRQGYKRHGARYKARRRAVDILFEAESRDVDPVAIIDDRKTLSNAVDPVVAPVAEYTEAIINGVAVELDTIDDLLSEHIADTWLLERLPSVDRAVLRVACWEMLYNPDVPVTTAVVEAVEIASQYSTDKAGAYINATLDNMASKVDELRERAANPGAVSGSDAPVAPWDDSEELPAEDEAEDSRP.

The tract at residues 154-188 (RAANPGAVSGSDAPVAPWDDSEELPAEDEAEDSRP) is disordered. The segment covering 172–188 (DDSEELPAEDEAEDSRP) has biased composition (acidic residues).

This sequence belongs to the NusB family.

In terms of biological role, involved in transcription antitermination. Required for transcription of ribosomal RNA (rRNA) genes. Binds specifically to the boxA antiterminator sequence of the ribosomal RNA (rrn) operons. The chain is Transcription antitermination protein NusB from Corynebacterium efficiens (strain DSM 44549 / YS-314 / AJ 12310 / JCM 11189 / NBRC 100395).